Here is a 592-residue protein sequence, read N- to C-terminus: RNA-binding protein 47 (592 aa).

Residues 1–24 (MTAEDAAAAMSSDSAAGGAASAKA) show a composition bias toward low complexity. Positions 1-26 (MTAEDAAAAMSSDSAAGGAASAKAPE) are disordered. 3 consecutive RRM domains span residues 73 to 151 (CEVF…CSVD), 153 to 235 (CRLF…WAEP), and 248 to 320 (KILY…LAKP). 2 positions are modified to asymmetric dimethylarginine; alternate: arginine 397 and arginine 408. Residues arginine 397 and arginine 408 each carry the omega-N-methylarginine; alternate modification.

This sequence belongs to the RRM RBM47 family. In terms of assembly, homodimer. Interacts with A1CF. Interacts with APOBEC1; form an mRNA editing complex. Interacts with RBPMS.

It is found in the nucleus. The protein resides in the cytoplasm. Functionally, single-stranded RNA-binding protein that functions in a variety of RNA processes, including alternative splicing, RNA stabilization, and RNA editing. Functions as an enzyme-substrate adapter for the cytidine deaminase APOBEC1. With APOBEC1 forms an mRNA editing complex involved into cytidine to uridine editing of a variety of mRNA molecules. Through the binding of their 3'UTR, also stabilizes a variety of mRNAs and regulates the expression of genes such as the interferon alpha/beta receptor and interleukin-10. Also involved in the alternative splicing of several genes including TJP1. Binds the pre-mRNA (U)GCAUG consensus sequences in downstream intronic regions of alternative exons, regulating their exclusion and inclusion into mRNAs. Independently of its RNA-binding activity, could negatively regulate MAVS by promoting its lysosomal degradation. The polypeptide is RNA-binding protein 47 (Canis lupus familiaris (Dog)).